A 155-amino-acid polypeptide reads, in one-letter code: NADPH-dependent 7-cyano-7-deazaguanine reductase (155 aa).

Residue C53 is the Thioimide intermediate of the active site. The Proton donor role is filled by D60. Substrate-binding positions include 75–77 (VES) and 94–95 (HE).

This sequence belongs to the GTP cyclohydrolase I family. QueF type 1 subfamily.

Its subcellular location is the cytoplasm. It catalyses the reaction 7-aminomethyl-7-carbaguanine + 2 NADP(+) = 7-cyano-7-deazaguanine + 2 NADPH + 3 H(+). The protein operates within tRNA modification; tRNA-queuosine biosynthesis. Catalyzes the NADPH-dependent reduction of 7-cyano-7-deazaguanine (preQ0) to 7-aminomethyl-7-deazaguanine (preQ1). The protein is NADPH-dependent 7-cyano-7-deazaguanine reductase of Brucella anthropi (strain ATCC 49188 / DSM 6882 / CCUG 24695 / JCM 21032 / LMG 3331 / NBRC 15819 / NCTC 12168 / Alc 37) (Ochrobactrum anthropi).